A 139-amino-acid polypeptide reads, in one-letter code: Angiogenin (139 aa).

Residues Met1–Cys21 form the signal peptide. His34 serves as the catalytic Proton acceptor. 3 disulfide bridges follow: Cys49-Cys102, Cys64-Cys111, and Cys82-Cys126. Positions 102 and 122 each coordinate tRNA. His133 acts as the Proton donor in catalysis.

This sequence belongs to the pancreatic ribonuclease family. In terms of assembly, homodimer. Interacts with RNH1; inhibiting ANG ribonuclease activity.

It is found in the secreted. Its subcellular location is the nucleus. The protein resides in the nucleolus. The protein localises to the cytoplasm. It localises to the stress granule. In terms of biological role, secreted ribonuclease that can either promote or restrict cell proliferation of target cells, depending on the context. Endocytosed in target cells via its receptor PLXNB2 and translocates to the cytoplasm or nucleus. Under stress conditions, localizes to the cytoplasm and promotes the assembly of stress granules (SGs): specifically cleaves a subset of tRNAs within anticodon loops to produce tRNA-derived stress-induced fragments (tiRNAs), resulting in translation repression and inhibition of cell proliferation. tiRNas also prevent formation of apoptosome, thereby promoting cell survival. Preferentially cleaves RNAs between a pyrimidine and an adenosine residue, suggesting that it cleaves the anticodon loop of tRNA(Ala) (32-UUAGCAU-38) after positions 33 and 36. Cleaves a subset of tRNAs, including tRNA(Ala), tRNA(Glu), tRNA(Gly), tRNA(Lys), tRNA(Val), tRNA(His), tRNA(Asp) and tRNA(Sec). Under growth conditions and in differentiated cells, translocates to the nucleus and stimulates ribosomal RNA (rRNA) transcription, including that containing the initiation site sequences of 45S rRNA, thereby promoting cell growth and proliferation. Angiogenin induces vascularization of normal and malignant tissues via its ability to promote rRNA transcription. The chain is Angiogenin (ANG) from Gallus gallus (Chicken).